The following is a 919-amino-acid chain: Phosphoenolpyruvate carboxylase (919 aa).

Active-site residues include H138 and K579.

It belongs to the PEPCase type 1 family. Mg(2+) serves as cofactor.

It catalyses the reaction oxaloacetate + phosphate = phosphoenolpyruvate + hydrogencarbonate. Forms oxaloacetate, a four-carbon dicarboxylic acid source for the tricarboxylic acid cycle. In Corynebacterium efficiens (strain DSM 44549 / YS-314 / AJ 12310 / JCM 11189 / NBRC 100395), this protein is Phosphoenolpyruvate carboxylase (ppc).